The chain runs to 172 residues: UPF0102 protein AM1_3954 (172 aa).

The protein belongs to the UPF0102 family.

The polypeptide is UPF0102 protein AM1_3954 (Acaryochloris marina (strain MBIC 11017)).